Reading from the N-terminus, the 490-residue chain is Probable malate:quinone oxidoreductase (490 aa).

It belongs to the MQO family. The cofactor is FAD.

It catalyses the reaction (S)-malate + a quinone = a quinol + oxaloacetate. The protein operates within carbohydrate metabolism; tricarboxylic acid cycle; oxaloacetate from (S)-malate (quinone route): step 1/1. The sequence is that of Probable malate:quinone oxidoreductase from Corynebacterium jeikeium (strain K411).